A 1417-amino-acid polypeptide reads, in one-letter code: DNA-directed RNA polymerase subunit beta' (1417 aa).

Residues Cys-71, Cys-73, Cys-86, and Cys-89 each contribute to the Zn(2+) site. Residues Asp-461, Asp-463, and Asp-465 each contribute to the Mg(2+) site. 4 residues coordinate Zn(2+): Cys-815, Cys-889, Cys-896, and Cys-899.

It belongs to the RNA polymerase beta' chain family. In terms of assembly, the RNAP catalytic core consists of 2 alpha, 1 beta, 1 beta' and 1 omega subunit. When a sigma factor is associated with the core the holoenzyme is formed, which can initiate transcription. Requires Mg(2+) as cofactor. Zn(2+) is required as a cofactor.

The catalysed reaction is RNA(n) + a ribonucleoside 5'-triphosphate = RNA(n+1) + diphosphate. Its function is as follows. DNA-dependent RNA polymerase catalyzes the transcription of DNA into RNA using the four ribonucleoside triphosphates as substrates. The protein is DNA-directed RNA polymerase subunit beta' of Pasteurella multocida (strain Pm70).